Here is a 216-residue protein sequence, read N- to C-terminus: Orotate phosphoribosyltransferase (216 aa).

5-phospho-alpha-D-ribose 1-diphosphate is bound by residues R100, K104, H106, and E126 to S134. An orotate-binding site is contributed by S130.

Belongs to the purine/pyrimidine phosphoribosyltransferase family. PyrE subfamily. Homodimer. Interacts with BrxC. The cofactor is Mg(2+).

The enzyme catalyses orotidine 5'-phosphate + diphosphate = orotate + 5-phospho-alpha-D-ribose 1-diphosphate. Its pathway is pyrimidine metabolism; UMP biosynthesis via de novo pathway; UMP from orotate: step 1/2. In terms of biological role, catalyzes the transfer of a ribosyl phosphate group from 5-phosphoribose 1-diphosphate to orotate, leading to the formation of orotidine monophosphate (OMP). The polypeptide is Orotate phosphoribosyltransferase (Bacillus subtilis (strain 168)).